The chain runs to 430 residues: Trigger factor (430 aa).

The region spanning 163–248 is the PPIase FKBP-type domain; the sequence is GDTAVFDFAG…LHEVKTKQVP (86 aa).

Belongs to the FKBP-type PPIase family. Tig subfamily.

It is found in the cytoplasm. The catalysed reaction is [protein]-peptidylproline (omega=180) = [protein]-peptidylproline (omega=0). Involved in protein export. Acts as a chaperone by maintaining the newly synthesized protein in an open conformation. Functions as a peptidyl-prolyl cis-trans isomerase. This is Trigger factor from Exiguobacterium sp. (strain ATCC BAA-1283 / AT1b).